A 367-amino-acid chain; its full sequence is 2'-5'-oligoadenylate synthase 1A (367 aa).

Residues 14–61 (DKFIEDYLLPDTTFGADVKSAVNVVCDFLKERCFQGAAHPVRVSKVVK) form an interaction with dsRNA region. ATP is bound at residue S64. 3 residues coordinate Mg(2+): D76, D78, and D149. Residues 201 to 211 (QRPTKLKSLIR) are interaction with dsRNA. ATP-binding residues include R211, K214, and Q231. The S-geranylgeranyl cysteine moiety is linked to residue C364.

It belongs to the 2-5A synthase family. In terms of assembly, monomer. Homotetramer. Interacts with OAS1D; the interaction inhibits OAS1A catalytic activity. The cofactor is Mg(2+). Post-translationally, C-terminal prenylated. As to expression, expressed in oocytes and granulosa cells of ovary, in intestine, stomach, spleen and uterus (at protein level). Expressed at high levels in the digestive tract and lymphoid organs. Expressed in ovary and spleen.

It is found in the cytoplasm. It localises to the mitochondrion. The protein resides in the nucleus. Its subcellular location is the microsome. The protein localises to the endoplasmic reticulum. It carries out the reaction 3 ATP = 5'-triphosphoadenylyl-(2'-&gt;5')-adenylyl-(2'-&gt;5')-adenosine + 2 diphosphate. Produced as a latent enzyme which is activated by dsRNA generated during the course of viral infection. The dsRNA activator must be at least 15 nucleotides long, and no modification of the 2'-hydroxyl group is tolerated. ssRNA or dsDNA do not act as activators. Its function is as follows. Interferon-induced, dsRNA-activated antiviral enzyme which plays a critical role in cellular innate antiviral response. In addition, it may also play a role in other cellular processes such as apoptosis, cell growth, differentiation and gene regulation. Synthesizes higher oligomers of 2'-5'-oligoadenylates (2-5A) from ATP which then bind to the inactive monomeric form of ribonuclease L (RNase L) leading to its dimerization and subsequent activation. Activation of RNase L leads to degradation of cellular as well as viral RNA, resulting in the inhibition of protein synthesis, thus terminating viral replication. Can mediate the antiviral effect via the classical RNase L-dependent pathway or an alternative antiviral pathway independent of RNase L. The polypeptide is 2'-5'-oligoadenylate synthase 1A (Oas1a) (Mus musculus (Mouse)).